A 103-amino-acid polypeptide reads, in one-letter code: Thioredoxin (103 aa).

Positions 1-103 (MVKEITDATF…ELDEVINKYV (103 aa)) constitute a Thioredoxin domain. Cysteines 28 and 31 form a disulfide.

The protein belongs to the thioredoxin family.

Component of the thioredoxin-thioredoxin reductase system. Participates in various redox reactions through the reversible oxidation of its active center dithiol to a disulfide and catalyzes dithiol-disulfide exchange reactions. This chain is Thioredoxin (trxA), found in Listeria innocua serovar 6a (strain ATCC BAA-680 / CLIP 11262).